A 448-amino-acid chain; its full sequence is Antizyme inhibitor 1 (448 aa).

It belongs to the Orn/Lys/Arg decarboxylase class-II family. ODC antizyme inhibitor subfamily. As to quaternary structure, monomer. Interacts with OAZ1 and OAZ3; this interaction disrupts the interaction between the antizyme and ODC1. Post-translationally, ubiquitinated, leading to its proteasomal degradation; a process that is reduced in presence of antizyme OAZ1.

The protein resides in the nucleus. In terms of biological role, antizyme inhibitor (AZI) protein that positively regulates ornithine decarboxylase (ODC) activity and polyamine uptake. AZI is an enzymatically inactive ODC homolog that counteracts the negative effect of ODC antizymes (AZs) OAZ1, OAZ2 and OAZ3 on ODC activity by competing with ODC for antizyme-binding. Inhibits antizyme-dependent ODC degradation and releases ODC monomers from their inactive complex with antizymes, leading to formation of the catalytically active ODC homodimer and restoring polyamine production. The sequence is that of Antizyme inhibitor 1 (AZIN1) from Pongo abelii (Sumatran orangutan).